Reading from the N-terminus, the 917-residue chain is Bifunctional aspartokinase/homoserine dehydrogenase 2, chloroplastic (917 aa).

The N-terminal 89 residues, Met-1–Asp-89, are a transit peptide targeting the chloroplast. Residues Met-90 to Leu-338 form an aspartokinase region. The interface stretch occupies residues Ser-339–Ile-563. ACT domains are found at residues Val-413–Gly-488 and Ala-494–Gly-571. Positions Ile-564–Ser-917 are homoserine dehydrogenase. NAD(+) contacts are provided by Ile-569 and Thr-650. NADP(+) contacts are provided by Ile-569, Thr-650, and Lys-674. 3 residues coordinate NADPH: Ile-569, Thr-650, and Lys-674. Residues Glu-701, Val-704, Ala-706, and Leu-708 each coordinate Na(+). Residues Gly-759 and Glu-762 each coordinate NADP(+). L-homoserine is bound by residues Glu-762 and Asp-773. Lys-777 functions as the Proton donor in the catalytic mechanism. Gly-894 lines the NAD(+) pocket. An NADP(+)-binding site is contributed by Gly-894. Gly-894 is a binding site for NADPH.

In the N-terminal section; belongs to the aspartokinase family. The protein in the C-terminal section; belongs to the homoserine dehydrogenase family. Homo- or heterodimer. A metal cation serves as cofactor.

Its subcellular location is the plastid. The protein resides in the chloroplast. It catalyses the reaction L-homoserine + NADP(+) = L-aspartate 4-semialdehyde + NADPH + H(+). The enzyme catalyses L-homoserine + NAD(+) = L-aspartate 4-semialdehyde + NADH + H(+). It carries out the reaction L-aspartate + ATP = 4-phospho-L-aspartate + ADP. The protein operates within amino-acid biosynthesis; L-lysine biosynthesis via DAP pathway; (S)-tetrahydrodipicolinate from L-aspartate: step 1/4. It participates in amino-acid biosynthesis; L-methionine biosynthesis via de novo pathway; L-homoserine from L-aspartate: step 1/3. It functions in the pathway amino-acid biosynthesis; L-methionine biosynthesis via de novo pathway; L-homoserine from L-aspartate: step 3/3. Its pathway is amino-acid biosynthesis; L-threonine biosynthesis; L-threonine from L-aspartate: step 1/5. The protein operates within amino-acid biosynthesis; L-threonine biosynthesis; L-threonine from L-aspartate: step 3/5. Functionally, bifunctional aspartate kinase and homoserine dehydrogenase that catalyzes the first and the third steps toward the synthesis of lysine, methionine and threonine from aspartate. The sequence is that of Bifunctional aspartokinase/homoserine dehydrogenase 2, chloroplastic (AKHSDH2) from Zea mays (Maize).